The sequence spans 469 residues: Cyclin-dependent kinase 14 (469 aa).

S24, S78, and S95 each carry phosphoserine. The tract at residues 103 to 133 (FKSSSAGKESPKVRRHSSPSSPTSPKFGKAD) is disordered. S134 carries the post-translational modification Phosphoserine. The region spanning 135–419 (YEKLEKLGEG…AQAALSHEYF (285 aa)) is the Protein kinase domain. ATP contacts are provided by residues 141–149 (LGEGSYATV) and K164. Residue D256 is the Proton acceptor of the active site. Residues 449-469 (ESMRAFGKNNSYGKSLSNSKH) are disordered. Positions 456–469 (KNNSYGKSLSNSKH) are enriched in polar residues.

The protein belongs to the protein kinase superfamily. CMGC Ser/Thr protein kinase family. CDC2/CDKX subfamily. In terms of assembly, found in a complex with LRP6, CCNY and CAPRIN2 during G2/M stage; CAPRIN2 functions as a scaffold for the complex by binding to CCNY via its N terminus and to CDK14 via its C terminus. Interacts with CCNY; CCNY mediates its recruitment to the plasma membrane and promotes phosphorylation of LRP6. Interacts with CCDN3 and CDKN1A. Interacts with SEPT8. Interacts with 14-3-3 proteina YWHAB, YWHAE, YWHAH and YWHAQ. In terms of tissue distribution, in the adult, widely expressed at low levels except in brain, kidney and testis where expression is high. In the brain, detected in cortex, hippocampus, dentate gyrus, amygdala cortex, parasubiculum and cerebellum. In the embryo, expressed predominantly in the nervous system.

It localises to the cell membrane. Its subcellular location is the cytoplasm. The protein localises to the nucleus. It catalyses the reaction L-seryl-[protein] + ATP = O-phospho-L-seryl-[protein] + ADP + H(+). The catalysed reaction is L-threonyl-[protein] + ATP = O-phospho-L-threonyl-[protein] + ADP + H(+). Its activity is regulated as follows. Serine/threonine-protein kinase activity is promoted by associated cyclins CCDN3 and CCNY and repressed by CDKN1A. In terms of biological role, serine/threonine-protein kinase involved in the control of the eukaryotic cell cycle, whose activity is controlled by an associated cyclin. Acts as a cell-cycle regulator of Wnt signaling pathway during G2/M phase by mediating the phosphorylation of LRP6 at 'Ser-1490', leading to the activation of the Wnt signaling pathway. Acts as a regulator of cell cycle progression and cell proliferation via its interaction with CCDN3. Phosphorylates RB1 in vitro, however the relevance of such result remains to be confirmed in vivo. May also play a role in meiosis, neuron differentiation and may indirectly act as a negative regulator of insulin-responsive glucose transport. The polypeptide is Cyclin-dependent kinase 14 (Cdk14) (Mus musculus (Mouse)).